The primary structure comprises 609 residues: Dynamin-like protein 2 (609 aa).

Residues 1–16 (MQINLLNDFIKAYENT) form an inserts into assembly domain of DLP1, required for tetramerization region. Positions 17-25 (YSVSFDDSF) are linker. Residues 63–310 (NIAIIGQFSS…FVGIFDRLLN (248 aa)) form the Dynamin-type G domain. Residues 68 to 75 (GQFSSGKS) are G1 motif. Residue 72 to 76 (SGKSS) coordinates GDP. Positions 93 to 95 (PVT) are G2 motif. A G3 motif region spans residues 158 to 161 (DTPG). The G4 motif stretch occupies residues 216-219 (NQKD).

It belongs to the TRAFAC class dynamin-like GTPase superfamily. Dynamin/Fzo/YdjA family. As to quaternary structure, forms a 2:2 heterotetramer with DLP1. DLP2 forms a central back-to-back dimer flanked on each side by a DLP1 subunit. In the crystal structures the 2 DLP1 subunits are in very different conformations.

Its subcellular location is the cytoplasm. The protein localises to the cytosol. It carries out the reaction GTP + H2O = GDP + phosphate + H(+). The heterotetrameric DLP1(2)-DLP2(2) complex tethers liposomes and may mediate their fusion. Initial binding is probably mediated by DLP1, while DLP2 couples DLP1 subunits and increases the effective reach of the complex up to 45 nm. The role of the nucleotide is unknown. This subunit alone very weakly binds to liposomes; GTP, GDP, GMPPCP and GMPPNP do not change heterotetramer binding. Tetramerization is required for GTPase activity, suggesting the GTPase domains (dynamin-type G) from DLP1 and DLP2 must dimerize to reconstitute the GTPase active site. The sequence is that of Dynamin-like protein 2 from Campylobacter jejuni subsp. jejuni serotype O:23/36 (strain 81-176).